Reading from the N-terminus, the 237-residue chain is Uridylate kinase (237 aa).

Residue 11–14 participates in ATP binding; that stretch reads KLSG. Residue Gly52 coordinates UMP. Gly53 and Arg57 together coordinate ATP. UMP-binding positions include Asp72 and 134 to 141; that span reads TGYSYFTT. Positions 162, 168, and 171 each coordinate ATP.

It belongs to the UMP kinase family. Homohexamer.

It localises to the cytoplasm. The enzyme catalyses UMP + ATP = UDP + ADP. Its pathway is pyrimidine metabolism; CTP biosynthesis via de novo pathway; UDP from UMP (UMPK route): step 1/1. With respect to regulation, inhibited by UTP. Catalyzes the reversible phosphorylation of UMP to UDP. The protein is Uridylate kinase of Mycoplasma capricolum subsp. capricolum (strain California kid / ATCC 27343 / NCTC 10154).